A 388-amino-acid chain; its full sequence is Spermidine/putrescine import ATP-binding protein PotA (388 aa).

The ABC transporter domain maps to 17 to 247 (IEIDHVTKRF…PATVFVANFI (231 aa)). 49–56 (GPSGCGKT) lines the ATP pocket.

Belongs to the ABC transporter superfamily. Spermidine/putrescine importer (TC 3.A.1.11.1) family. As to quaternary structure, the complex is composed of two ATP-binding proteins (PotA), two transmembrane proteins (PotB and PotC) and a solute-binding protein (PotD).

Its subcellular location is the cell membrane. It carries out the reaction ATP + H2O + polyamine-[polyamine-binding protein]Side 1 = ADP + phosphate + polyamineSide 2 + [polyamine-binding protein]Side 1.. Functionally, part of the ABC transporter complex PotABCD involved in spermidine/putrescine import. Responsible for energy coupling to the transport system. This is Spermidine/putrescine import ATP-binding protein PotA from Mycobacterium sp. (strain KMS).